Here is a 205-residue protein sequence, read N- to C-terminus: Large ribosomal subunit protein uL4 (205 aa).

Residues 43–78 (ARAGTKAQKTRSEVAGGGKKPWRQKGTGNARAGTIR) form a disordered region.

This sequence belongs to the universal ribosomal protein uL4 family. Part of the 50S ribosomal subunit.

In terms of biological role, one of the primary rRNA binding proteins, this protein initially binds near the 5'-end of the 23S rRNA. It is important during the early stages of 50S assembly. It makes multiple contacts with different domains of the 23S rRNA in the assembled 50S subunit and ribosome. Its function is as follows. Forms part of the polypeptide exit tunnel. The polypeptide is Large ribosomal subunit protein uL4 (Halorhodospira halophila (strain DSM 244 / SL1) (Ectothiorhodospira halophila (strain DSM 244 / SL1))).